Here is a 565-residue protein sequence, read N- to C-terminus: Anaphase-promoting complex subunit 7 (565 aa).

10 TPR repeats span residues 101-134 (EIEVKYKMAECYTMLKLDKDAIAVLDGIPSRQRT), 169-202 (LDAILGLLSLSVKGAEVASMTMNVIQTVPNLDWL), 203-236 (SVWIKAYAFVHTGDNSRAINTICSLEKKSLLRDN), 237-270 (VDLLGSLADLYFRAGDSKNSVLKFEQAQMLDPYL), 339-372 (VQALLLKGAALRNMGRVQEAIIHFREAIRLAPCR), 373-406 (LDCYEGLIECYLASNSIREAMVMANNVYKTLGAN), 407-439 (AQTLTLLATVCLEDPVTQEKAKTLLDKALAQRP), 442-474 (VKAVVKKAELLSREQKYEDGIALLRNALANQSD), 475-508 (CVLHRILGDFLVAVNEYQEAMDQYSIALSLDPND), and 509-531 (QKSLEGMQKMEKEESPTDATQEE). Lys-229 carries the N6-acetyllysine modification. The span at 513-523 (EGMQKMEKEES) shows a compositional bias: basic and acidic residues. Positions 513-565 (EGMQKMEKEESPTDATQEEDVDDMEGSGEEGDLEGSDSEAAQWADQEQWFGMQ) are disordered. The segment covering 528–549 (TQEEDVDDMEGSGEEGDLEGSD) has biased composition (acidic residues).

The protein belongs to the APC7 family. In terms of assembly, V-shaped homodimer. The mammalian APC/C is composed at least of 14 distinct subunits ANAPC1, ANAPC2, CDC27/APC3, ANAPC4, ANAPC5, CDC16/APC6, ANAPC7, CDC23/APC8, ANAPC10, ANAPC11, CDC26/APC12, ANAPC13, ANAPC15 and ANAPC16 that assemble into a complex of at least 19 chains with a combined molecular mass of around 1.2 MDa; APC/C interacts with FZR1 and FBXO5.

The protein localises to the cytoplasm. Its subcellular location is the cytoskeleton. It localises to the nucleus. The protein resides in the spindle. It functions in the pathway protein modification; protein ubiquitination. In terms of biological role, component of the anaphase promoting complex/cyclosome (APC/C), a cell cycle-regulated E3 ubiquitin ligase that controls progression through mitosis and the G1 phase of the cell cycle. The APC/C complex acts by mediating ubiquitination and subsequent degradation of target proteins: it mainly mediates the formation of 'Lys-11'-linked polyubiquitin chains and, to a lower extent, the formation of 'Lys-48'- and 'Lys-63'-linked polyubiquitin chains. The APC/C complex catalyzes assembly of branched 'Lys-11'-/'Lys-48'-linked branched ubiquitin chains on target proteins. APC7 is not required for the assembly of the APC/C complex, but has an enzyme-substrate adapter activity mediating the processive ubiquitination of specific substrates. Involved in brain development through the specific ubiquitination and clearance of MKI67 from constitutive heterochromatin after neuronal progenitors exit mitosis. In Mus musculus (Mouse), this protein is Anaphase-promoting complex subunit 7 (Anapc7).